A 309-amino-acid polypeptide reads, in one-letter code: Protein FdhE (309 aa).

This sequence belongs to the FdhE family.

It is found in the cytoplasm. Necessary for formate dehydrogenase activity. This chain is Protein FdhE, found in Salmonella dublin (strain CT_02021853).